The primary structure comprises 324 residues: MKTAKIYQYQLPMDSGVILRDQRLQQRDGLIIELSDGKHTAKGEIAPLPEFSQENLEQAREDLISLTQAWLNDEVLDVDANCPSVAFGFSMALLELENNLPEVGNYQVAPLCSGDPDDLVVKLNEMSGKKVAKIKVGMYEAIRDGMVANMFLELIPDLSLRLDANRGWTPKKAEQFANYVSPQYRSRIEFLEEPCHRPEESLEFSKATGIAIAWDETVRDEGFEVKAQDGVAAIVIKPTLVGSVGKCIELVEQAHLLGMQAVISSSIESSLALTQLARLAAWKTPNTIPGLDTIDLFKMQLDTPWPHCELPMQALSDLEVIWES.

The Proton donor role is filled by Lys-135. Mg(2+)-binding residues include Asp-163, Glu-192, and Asp-215. Lys-237 acts as the Proton acceptor in catalysis.

It belongs to the mandelate racemase/muconate lactonizing enzyme family. MenC type 1 subfamily. The cofactor is a divalent metal cation.

The catalysed reaction is (1R,6R)-6-hydroxy-2-succinyl-cyclohexa-2,4-diene-1-carboxylate = 2-succinylbenzoate + H2O. The protein operates within quinol/quinone metabolism; 1,4-dihydroxy-2-naphthoate biosynthesis; 1,4-dihydroxy-2-naphthoate from chorismate: step 4/7. Its pathway is quinol/quinone metabolism; menaquinone biosynthesis. Converts 2-succinyl-6-hydroxy-2,4-cyclohexadiene-1-carboxylate (SHCHC) to 2-succinylbenzoate (OSB). In Aliivibrio salmonicida (strain LFI1238) (Vibrio salmonicida (strain LFI1238)), this protein is o-succinylbenzoate synthase.